Consider the following 287-residue polypeptide: Acetyl-coenzyme A carboxylase carboxyl transferase subunit beta (287 aa).

The region spanning 25–287 (IWTKCSGCVQ…KLTQQSFSEK (263 aa)) is the CoA carboxyltransferase N-terminal domain. Residues cysteine 29, cysteine 32, cysteine 48, and cysteine 51 each coordinate Zn(2+). The segment at 29–51 (CSGCVQLLYTKELERNLQVCPKC) adopts a C4-type zinc-finger fold.

This sequence belongs to the AccD/PCCB family. In terms of assembly, acetyl-CoA carboxylase is a heterohexamer composed of biotin carboxyl carrier protein (AccB), biotin carboxylase (AccC) and two subunits each of ACCase subunit alpha (AccA) and ACCase subunit beta (AccD). It depends on Zn(2+) as a cofactor.

Its subcellular location is the cytoplasm. The catalysed reaction is N(6)-carboxybiotinyl-L-lysyl-[protein] + acetyl-CoA = N(6)-biotinyl-L-lysyl-[protein] + malonyl-CoA. The protein operates within lipid metabolism; malonyl-CoA biosynthesis; malonyl-CoA from acetyl-CoA: step 1/1. Functionally, component of the acetyl coenzyme A carboxylase (ACC) complex. Biotin carboxylase (BC) catalyzes the carboxylation of biotin on its carrier protein (BCCP) and then the CO(2) group is transferred by the transcarboxylase to acetyl-CoA to form malonyl-CoA. The chain is Acetyl-coenzyme A carboxylase carboxyl transferase subunit beta from Blochmanniella floridana.